A 522-amino-acid chain; its full sequence is Cytochrome P450 1A1 (522 aa).

Residue Phe229 coordinates substrate. Cys463 provides a ligand contact to heme.

This sequence belongs to the cytochrome P450 family. Heme serves as cofactor. In terms of tissue distribution, liver.

It is found in the endoplasmic reticulum membrane. The protein localises to the microsome membrane. It catalyses the reaction an organic molecule + reduced [NADPH--hemoprotein reductase] + O2 = an alcohol + oxidized [NADPH--hemoprotein reductase] + H2O + H(+). Its function is as follows. Cytochromes P450 are a group of heme-thiolate monooxygenases. They oxidize a variety of structurally unrelated compounds, including steroids, fatty acids, and xenobiotics. The polypeptide is Cytochrome P450 1A1 (cyp1a1) (Oncorhynchus mykiss (Rainbow trout)).